The chain runs to 324 residues: NADH-ubiquinone oxidoreductase chain 1 (324 aa).

Transmembrane regions (helical) follow at residues 9–29 (VLNPLAYIVPVLLAVAFLTLL), 75–95 (FLFLATPMLALTLALTLWAPM), 106–126 (LGVLFVLALSSLAVYSILGSG), 146–166 (ISYEVSLGLILLSVIIFTGGF), 177–197 (SIWLVVPAWPLAALWYISTLA), 237–257 (ILLMNTLSAILFLGATHIPAL), 259–279 (ELTAMNLMTKAALLSVVFLWV), and 299–319 (FLPMTLALVLWHLALPIALAG).

Belongs to the complex I subunit 1 family.

It localises to the mitochondrion inner membrane. The catalysed reaction is a ubiquinone + NADH + 5 H(+)(in) = a ubiquinol + NAD(+) + 4 H(+)(out). In terms of biological role, core subunit of the mitochondrial membrane respiratory chain NADH dehydrogenase (Complex I) that is believed to belong to the minimal assembly required for catalysis. Complex I functions in the transfer of electrons from NADH to the respiratory chain. The immediate electron acceptor for the enzyme is believed to be ubiquinone. This is NADH-ubiquinone oxidoreductase chain 1 (MT-ND1) from Thymallus arcticus (Arctic grayling).